The sequence spans 74 residues: RNA-binding protein Hfq (74 aa).

The region spanning 9–69 (DQFLNQLRKE…ISTFAPQKNV (61 aa)) is the Sm domain.

The protein belongs to the Hfq family. As to quaternary structure, homohexamer.

Functionally, RNA chaperone that binds small regulatory RNA (sRNAs) and mRNAs to facilitate mRNA translational regulation in response to envelope stress, environmental stress and changes in metabolite concentrations. Also binds with high specificity to tRNAs. The polypeptide is RNA-binding protein Hfq (Anoxybacillus flavithermus (strain DSM 21510 / WK1)).